The chain runs to 107 residues: Putative protein RFPL3S (107 aa).

In terms of tissue distribution, strongly expressed in the testis and weakly in brain, placenta and pancreas.

The sequence is that of Putative protein RFPL3S (RFPL3S) from Homo sapiens (Human).